The primary structure comprises 517 residues: Synaptic vesicular amine transporter (517 aa).

Over Met-1–Lys-20 the chain is Cytoplasmic. The helical transmembrane segment at Leu-21 to Val-41 threads the bilayer. The Extracellular segment spans residues Pro-42–Val-132. Asn-84, Asn-91, and Asn-112 each carry an N-linked (GlcNAc...) asparagine glycan. Cysteines 120 and 327 form a disulfide. The helical transmembrane segment at Gln-133 to Gly-153 threads the bilayer. At Leu-154–Pro-162 the chain is on the cytoplasmic side. A helical membrane pass occupies residues Ile-163–Arg-183. Residues Thr-184–Arg-192 lie on the Extracellular side of the membrane. A helical membrane pass occupies residues Ser-193 to Val-213. The Cytoplasmic portion of the chain corresponds to Tyr-214 to Asn-222. The helical transmembrane segment at Ala-223–Leu-245 threads the bilayer. Leu-231 and Val-235 together coordinate serotonin. Over Tyr-246–Lys-251 the chain is Extracellular. The chain crosses the membrane as a helical span at residues Thr-252–Gln-274. The Cytoplasmic segment spans residues Pro-275–Asp-294. The chain crosses the membrane as a helical span at residues Pro-295 to Leu-314. Serotonin is bound by residues Asn-308, Ile-311, Glu-315, Phe-337, and Tyr-344. The Extracellular portion of the chain corresponds to Glu-315–Trp-331. The chain crosses the membrane as a helical span at residues Gln-332–Ala-355. Topologically, residues His-356 to Arg-360 are cytoplasmic. Residues Trp-361–Ala-381 form a helical membrane-spanning segment. The Extracellular portion of the chain corresponds to Lys-382–Phe-392. The helical transmembrane segment at Gly-393–Val-413 threads the bilayer. Asp-402 lines the serotonin pocket. Residues Asp-414–His-417 lie on the Cytoplasmic side of the membrane. A helical membrane pass occupies residues Val-418–Ile-438. A serotonin-binding site is contributed by Tyr-436. Topologically, residues Gly-439–Gly-443 are extracellular. Residues Gly-444–Leu-465 form a helical membrane-spanning segment. Residues Phe-466–Asp-517 are Cytoplasmic-facing. Ser-514 and Ser-516 each carry phosphoserine; by CK2.

The protein belongs to the major facilitator superfamily. Vesicular transporter family. Interacts with SLC6A3.

It is found in the cytoplasmic vesicle. The protein resides in the secretory vesicle. The protein localises to the synaptic vesicle membrane. Its subcellular location is the secretory vesicle membrane. It localises to the cell projection. It is found in the axon. The protein resides in the dendrite. It carries out the reaction serotonin(in) + 2 H(+)(out) = serotonin(out) + 2 H(+)(in). The catalysed reaction is dopamine(in) + 2 H(+)(out) = dopamine(out) + 2 H(+)(in). It catalyses the reaction histamine(in) + 2 H(+)(out) = histamine(out) + 2 H(+)(in). With respect to regulation, strongly inhibited by reserpine and tetrabenazine. Also inhibited to a lesser extent by ketanserin and fenfluramine. Reserpine and ketanserin inhibit by blocking the substrate-binding pocket. Tetrabenazine traps SLC18A2/VMAT2 in an occluded conformation and its inhibition is specific to SLC18A2/VMAT2 but not SLC18A1/VMAT1. Electrogenic antiporter that exchanges one cationic monoamine with two intravesicular protons across the membrane of secretory and synaptic vesicles. Uses the electrochemical proton gradient established by the V-type proton-pump ATPase to accumulate high concentrations of monoamines inside the vesicles prior to their release via exocytosis. Transports a variety of catecholamines such as dopamine, adrenaline and noradrenaline, histamine, and indolamines such as serotonin. Regulates the transvesicular monoaminergic gradient that determines the quantal size. Mediates somatodendritic dopamine release in hippocampal neurons, likely as part of a regulated secretory pathway that integrates retrograde synaptic signals. Acts as a primary transporter for striatal dopamine loading ensuring impulse-dependent release of dopamine at the synaptic cleft. Responsible for histamine and serotonin storage and subsequent corelease from mast cell granules. The protein is Synaptic vesicular amine transporter (SLC18A2) of Bos taurus (Bovine).